Here is a 298-residue protein sequence, read N- to C-terminus: Putative olfactory receptor 10D4 (298 aa).

The Extracellular portion of the chain corresponds to Met-1 to Thr-23. Asn-3 carries an N-linked (GlcNAc...) asparagine glycan. The chain crosses the membrane as a helical span at residues Ala-24–Leu-44. Residues Thr-45 to Arg-52 are Cytoplasmic-facing. Residues Leu-53–Ser-73 traverse the membrane as a helical segment. Topologically, residues Thr-74 to Ser-97 are extracellular. Residues Cys-95 and Cys-187 are joined by a disulfide bond. Residues Gln-98–Cys-118 traverse the membrane as a helical segment. The Cytoplasmic portion of the chain corresponds to Asp-119–Arg-137. Residues Val-138–Thr-158 form a helical membrane-spanning segment. Residues Pro-159–Arg-195 are Extracellular-facing. The chain crosses the membrane as a helical span at residues Val-196–Ser-215. Over Tyr-216–Ala-235 the chain is Cytoplasmic. A helical membrane pass occupies residues Phe-236–Ile-256. Topologically, residues Tyr-257–Gly-267 are extracellular. Residues Ser-268–Leu-288 traverse the membrane as a helical segment. Topologically, residues Arg-289–Pro-298 are cytoplasmic.

The protein belongs to the G-protein coupled receptor 1 family.

Its subcellular location is the cell membrane. Functionally, odorant receptor. The polypeptide is Putative olfactory receptor 10D4 (OR10D4P) (Homo sapiens (Human)).